The following is a 356-amino-acid chain: MVSHEENTSIVEWFLGPHPYTYPPYGIEMIHEDDEVAVAHHHHHHQSGEYYREYEDHRSSDVDNDEIIARTLQDDFLQLEIAESNDYSHQNQQQQHQQEGYTNNYSNNNNGYAWNDQSPAVDYSSEWIGNDNDQDGRSDDSVNVFSCSSPSDTDEYVYSWESDQCDADGEFGRRLNQMVPIPYIPKINGEIPPEEEAVSDHERLRNRLEMFDFTEVKVPGDGNCQFRALADQLYKTADRHKHVRRQIVKQLKSRPDSYQGYVPMDFSDYLRKMSRSGEWGDHVTLQAAADAYRVKIVVLTSFKDTCYIEILPTSQESKGVIFLSFWAEVHYNAIYLNRDTSETELQRKRKWWRFGN.

The tract at residues 86-117 is disordered; sequence DYSHQNQQQQHQQEGYTNNYSNNNNGYAWNDQ. Over residues 89 to 115 the composition is skewed to low complexity; that stretch reads HQNQQQQHQQEGYTNNYSNNNNGYAWN. Residues 213 to 337 form the OTU domain; it reads FTEVKVPGDG…EVHYNAIYLN (125 aa). Aspartate 221 is an active-site residue. The Nucleophile role is filled by cysteine 224. Residue histidine 330 is part of the active site.

It belongs to the peptidase C85 family.

The enzyme catalyses Thiol-dependent hydrolysis of ester, thioester, amide, peptide and isopeptide bonds formed by the C-terminal Gly of ubiquitin (a 76-residue protein attached to proteins as an intracellular targeting signal).. In terms of biological role, hydrolase that can remove conjugated ubiquitin from proteins in vitro and may therefore play an important regulatory role at the level of protein turnover by preventing degradation. Cysteine protease with a preference for 'Lys-63' over 'Lys-48' over 'Met-1' -linked ubiquitin (UB) tetramers as substrates. Also cleaves RUB-GST fusion. This is OVARIAN TUMOR DOMAIN-containing deubiquitinating enzyme 10 from Arabidopsis thaliana (Mouse-ear cress).